The following is a 141-amino-acid chain: Nucleoside diphosphate kinase (141 aa).

ATP is bound by residues Lys-11, Phe-59, Arg-87, Thr-93, Arg-104, and Asn-114. Catalysis depends on His-117, which acts as the Pros-phosphohistidine intermediate.

The protein belongs to the NDK family. Homotetramer. The cofactor is Mg(2+).

It localises to the cytoplasm. The catalysed reaction is a 2'-deoxyribonucleoside 5'-diphosphate + ATP = a 2'-deoxyribonucleoside 5'-triphosphate + ADP. The enzyme catalyses a ribonucleoside 5'-diphosphate + ATP = a ribonucleoside 5'-triphosphate + ADP. Major role in the synthesis of nucleoside triphosphates other than ATP. The ATP gamma phosphate is transferred to the NDP beta phosphate via a ping-pong mechanism, using a phosphorylated active-site intermediate. The chain is Nucleoside diphosphate kinase from Cellvibrio japonicus (strain Ueda107) (Pseudomonas fluorescens subsp. cellulosa).